Consider the following 495-residue polypeptide: MFLQIVTSVLATGLLYALISVLQQNRTLSASLPPGPPGHWLFGNAPPKAFPYRHFAELTETYGPVFTLRFGRRIVCVIGRYQAAVDILMKHSAETSDRPRSVAANEIMSKGHRVLMTPAGERLKKYRRALHAFLQPSSSATYKPMQYKNAKNYVLDCLHDGGHHLDHGRKYAASVVMSVAYGKTTPTSYSDPEVLQINKSLARLGAALKPGAYLVDTYPILKYCPGYASHLRRYREEELALITKQANAVRELLAKGEAPPSFTAYLIENQERLGISDDELAYLSGAIFGAGSDTTAAALGIMTMAAACYPEAQARVQAQLDEVVGRDRAPTFEDEDLLPEVTAFVLEAYRWRPVSAGGFSHRATKDVVWNGYVIPAGAEIIGNHWAISRDPEVYPNPEDFKPARWLNEHGRVRNDLKFTNFGFGRRVCVGQHVADQSLFINTALVLWAFIISQDAQCPIDTYAFTDTANVHPLPFSLHFEPRVKDMEAMLGAQAE.

A helical transmembrane segment spans residues 2–22; sequence FLQIVTSVLATGLLYALISVL. 2 N-linked (GlcNAc...) asparagine glycosylation sites follow: Asn25 and Asn198. Residue Cys428 coordinates heme.

Belongs to the cytochrome P450 family. Heme serves as cofactor.

It localises to the membrane. It functions in the pathway secondary metabolite biosynthesis. In terms of biological role, cytochrome P450 monooxygenase that is able to use 4-ethoxybenzoic acid as a substrate for oxidation. In Postia placenta (strain ATCC 44394 / Madison 698-R) (Brown rot fungus), this protein is Cytochrome P450 monooxygenase 88.